Here is a 193-residue protein sequence, read N- to C-terminus: Putative RNA methyltransferase At5g10620 (193 aa).

S-adenosyl-L-methionine is bound by residues Leu-110, Gly-142, and 161-166 (LSSMVL).

It belongs to the RNA methyltransferase RlmH family.

The chain is Putative RNA methyltransferase At5g10620 from Arabidopsis thaliana (Mouse-ear cress).